A 680-amino-acid chain; its full sequence is MIDRYKHQQLRIGSVSPQQISAWAKKILPNGEMVGEVTKPYTFHYKTNKPEKDGLFCERIFGPIKSGICACGNYRVIGDKKEDPKFCEQCGVEFVDSRVRRYQMGYIKLACPVTHVWYLKRLPSYIANLLDKPLKELEGLVYCDFLFARPVAKKPTFLRLRGSFEYEIQSWKYSIPLFFTTQGFDTFRNREISTGAGAIREQLADLDLRLITDSSLVEWKELGEEGATGNEWEDRKIGRRKDFLVRRMELAKHFIRTNVEPERMVLCLLPVLPPELRPIIQIDGGKPMSSDINELYRRVIYRNNTLTDLLTTSRSTPGELVMCQEKLVQEAVDTLLDNGIRGQPMRDSHNKVYKSFSDVIEGKEGRFRETLLGKRVDYSGRSVIVVGPSLSLHRCGLPREIAIELFQTFVIRGLIRQHAASNIGVAKSKIREKEPIVWEILQEVMQGHPVLLNRAPTLHRLGIQAFQPILVEGRAIFLHPLVCKGFNADFDGDQMAVHVPLSLEAQAEARLLMFSHMNLLSPAIGDPISVPTQDMLMGLYVLTTGNHRGICANRYNPSNHRNYQNEKIDDNNYKYTKEPYFCSSYDALGAYRQKRIYLDSPLWLRWRLDQRVIASREVPIEVQYESLGTYHEIYGHYLIVRNVKKEILCIDIRTTVGHISFYREIEEAIQGFCRACSYGT.

Residues Cys-69, Cys-71, Cys-87, and Cys-90 each contribute to the Zn(2+) site. Residues Asp-489, Asp-491, and Asp-493 each coordinate Mg(2+).

It belongs to the RNA polymerase beta' chain family. RpoC1 subfamily. In plastids the minimal PEP RNA polymerase catalytic core is composed of four subunits: alpha, beta, beta', and beta''. When a (nuclear-encoded) sigma factor is associated with the core the holoenzyme is formed, which can initiate transcription. Requires Mg(2+) as cofactor. Zn(2+) is required as a cofactor.

The protein resides in the plastid. The protein localises to the chloroplast. It catalyses the reaction RNA(n) + a ribonucleoside 5'-triphosphate = RNA(n+1) + diphosphate. Its function is as follows. DNA-dependent RNA polymerase catalyzes the transcription of DNA into RNA using the four ribonucleoside triphosphates as substrates. The polypeptide is DNA-directed RNA polymerase subunit beta' (Nandina domestica (Heavenly bamboo)).